Reading from the N-terminus, the 333-residue chain is O-acetyl transferase (333 aa).

The protein belongs to the acyltransferase 3 family.

The protein resides in the host cell inner membrane. Its function is as follows. Antigenically converts S.flexneri serotype X to 3a, Y to 3b, 1a to 1b and 4a to 4b by O-acetylating the O-antigenic polysaccharide chain. The polypeptide is O-acetyl transferase (OAC) (Shigella flexneri (Shigella flexneri bacteriophage VI)).